The primary structure comprises 217 residues: Somatotropin (217 aa).

The signal sequence occupies residues 1–26; sequence MMAAGPRTSLLLAFALLCLPWTQVVG. His-46 lines the Zn(2+) pocket. A disulfide bridge connects residues Cys-79 and Cys-190. Ser-132 is modified (phosphoserine). Glu-199 contributes to the Zn(2+) binding site. Cysteines 207 and 215 form a disulfide.

It belongs to the somatotropin/prolactin family.

It is found in the secreted. Functionally, plays an important role in growth control. Its major role in stimulating body growth is to stimulate the liver and other tissues to secrete IGF1. It stimulates both the differentiation and proliferation of myoblasts. It also stimulates amino acid uptake and protein synthesis in muscle and other tissues. In Bos mutus grunniens (Wild yak), this protein is Somatotropin (GH1).